Here is a 493-residue protein sequence, read N- to C-terminus: Galactose-1-phosphate uridylyltransferase (493 aa).

The protein belongs to the galactose-1-phosphate uridylyltransferase type 2 family.

The protein localises to the cytoplasm. It carries out the reaction alpha-D-galactose 1-phosphate + UDP-alpha-D-glucose = alpha-D-glucose 1-phosphate + UDP-alpha-D-galactose. It participates in carbohydrate metabolism; galactose metabolism. The polypeptide is Galactose-1-phosphate uridylyltransferase (Streptococcus pneumoniae serotype 19F (strain G54)).